We begin with the raw amino-acid sequence, 385 residues long: D-alanine--D-alanine ligase (385 aa).

The ATP-grasp domain maps to 165 to 375 (KRVFTSFGLK…YPELVDRLVE (211 aa)). 201–256 (AGEHGWPLFVKPARAGSSIGITKVDDLAGLDEAVAEAQRHDPKIIVEALLRGREIE) serves as a coordination point for ATP. 3 residues coordinate Mg(2+): Asp-329, Glu-342, and Asn-344.

Belongs to the D-alanine--D-alanine ligase family. The cofactor is Mg(2+). Requires Mn(2+) as cofactor.

The protein localises to the cytoplasm. It catalyses the reaction 2 D-alanine + ATP = D-alanyl-D-alanine + ADP + phosphate + H(+). It participates in cell wall biogenesis; peptidoglycan biosynthesis. Functionally, cell wall formation. The chain is D-alanine--D-alanine ligase from Streptomyces avermitilis (strain ATCC 31267 / DSM 46492 / JCM 5070 / NBRC 14893 / NCIMB 12804 / NRRL 8165 / MA-4680).